The following is a 37-amino-acid chain: MVETLLSGIVLGLVPITLAGLFVTAYLQYRRGDRLDI.

Residues 5 to 25 traverse the membrane as a helical segment; sequence LLSGIVLGLVPITLAGLFVTA.

This sequence belongs to the PetG family. In terms of assembly, the 4 large subunits of the cytochrome b6-f complex are cytochrome b6, subunit IV (17 kDa polypeptide, PetD), cytochrome f and the Rieske protein, while the 4 small subunits are PetG, PetL, PetM and PetN. The complex functions as a dimer.

Its subcellular location is the plastid. It localises to the chloroplast thylakoid membrane. In terms of biological role, component of the cytochrome b6-f complex, which mediates electron transfer between photosystem II (PSII) and photosystem I (PSI), cyclic electron flow around PSI, and state transitions. PetG is required for either the stability or assembly of the cytochrome b6-f complex. The chain is Cytochrome b6-f complex subunit 5 from Gnetum parvifolium (Small-leaved jointfir).